A 176-amino-acid polypeptide reads, in one-letter code: Probable non-specific lipid-transfer protein 1 (176 aa).

An N-terminal signal peptide occupies residues 1–37 (MRTVSAPSAVALVVIVAAGLAWTSLASVAPPAPAPGS). Disulfide bonds link C41–C89, C51–C66, C67–C112, and C87–C128. Residues 139-176 (QLPVSLRHGPVTGPSDPAHKARLERPQIRVPPPAPEKA) form a disordered region. Residues 155–165 (PAHKARLERPQ) are compositionally biased toward basic and acidic residues. Residues 167–176 (RVPPPAPEKA) show a composition bias toward pro residues.

This sequence belongs to the plant LTP family.

In terms of biological role, plant non-specific lipid-transfer proteins transfer phospholipids as well as galactolipids across membranes. May play a role in wax or cutin deposition in the cell walls of expanding epidermal cells and certain secretory tissues. The chain is Probable non-specific lipid-transfer protein 1 from Parietaria judaica (Pellitory-of-the-wall).